We begin with the raw amino-acid sequence, 1507 residues long: Chromatin-remodeling ATPase INO80 (1507 aa).

2 disordered regions span residues 30 to 82 (PEDE…DAED) and 428 to 452 (RKKQ…KRQQ). A compositionally biased stretch (polar residues) spans 38 to 67 (GSSSQDESRSTQGGVVANYSNGSKSRMNAS). Positions 350 to 475 (AWINIVRRDI…SHFMQNKTDS (126 aa)) constitute a DBINO domain. Residues 428–450 (RKKQEKEAAEAFKREQEQRESKR) are compositionally biased toward basic and acidic residues. The 172-residue stretch at 598–769 (VNCYEQGLNG…WALLHFIMPM (172 aa)) folds into the Helicase ATP-binding domain. 611-618 (DEMGLGKT) lines the ATP pocket. Residues 1210-1360 (TLDILLKRLR…QLVMTGGHVQ (151 aa)) enclose the Helicase C-terminal domain. The segment at 1415–1507 (LEELEDVDRQ…KGFDPSSSAN (93 aa)) is disordered. Over residues 1491 to 1507 (ASVTESNKGFDPSSSAN) the composition is skewed to polar residues.

This sequence belongs to the SNF2/RAD54 helicase family. In terms of assembly, component of the INO80 chromatin-remodeling complex. Associates with REF6/EIN6.

Its subcellular location is the nucleus. It carries out the reaction ATP + H2O = ADP + phosphate + H(+). ATPase component of the chromatin remodeling INO80 complex which is involved in transcriptional regulation, DNA replication and DNA repair. Binds DNA. As part of the INO80 complex, remodels chromatin by shifting nucleosomes. The INO80 complex controls ethylene-induced H2A.Z eviction dynamics. Positive regulator of homologous recombination, but not an essential component of homologous recombination. Not involved in the illegitimate repair pathway. This is Chromatin-remodeling ATPase INO80 from Arabidopsis thaliana (Mouse-ear cress).